We begin with the raw amino-acid sequence, 104 residues long: Transcription initiation factor IIA subunit 2 (104 aa).

Belongs to the TFIIA subunit 2 family. TFIIA is a heterodimer of the large unprocessed subunit 1 and a small subunit gamma.

It is found in the nucleus. Functionally, TFIIA is a component of the transcription machinery of RNA polymerase II and plays an important role in transcriptional activation. TFIIA in a complex with TBP mediates transcriptional activity. The polypeptide is Transcription initiation factor IIA subunit 2 (Schistosoma mansoni (Blood fluke)).